Here is a 289-residue protein sequence, read N- to C-terminus: GNAFVVSLALADLVVALYPYPLVLLAIFHNGWTLGEMHCKVSGFVMGLSVIGSIFNITAIAINRYCYICHSFAYDKVYSCWNTMLYVSLIWVLTVIATVPNFFVGSLKYDPRIYSCTFVQTASSYYTIAVVVIHFIVPITVVSFCYLRIWVLVLQVRRRVKSETKPRLKPSDFRNFLTMFVVFVIFAFCWAPLNFIGLAVAINPSEMAPKVPEWLFIISYFMAYFNSCLNAIIYGLLNQNFRNEYKRILMSLWMPRLFFQDTSKGGTDGQKSKPSPALNNNDQMKTDTL.

Residues 1-2 lie on the Cytoplasmic side of the membrane; sequence GN. The helical transmembrane segment at 3–23 threads the bilayer; it reads AFVVSLALADLVVALYPYPLV. At 24–41 the chain is on the extracellular side; the sequence is LLAIFHNGWTLGEMHCKV. Cys-39 and Cys-116 are disulfide-bonded. Residues 42 to 62 traverse the membrane as a helical segment; it reads SGFVMGLSVIGSIFNITAIAI. The Cytoplasmic portion of the chain corresponds to 63–81; it reads NRYCYICHSFAYDKVYSCW. The chain crosses the membrane as a helical span at residues 82 to 102; it reads NTMLYVSLIWVLTVIATVPNF. Over 103 to 126 the chain is Extracellular; that stretch reads FVGSLKYDPRIYSCTFVQTASSYY. The helical transmembrane segment at 127–147 threads the bilayer; that stretch reads TIAVVVIHFIVPITVVSFCYL. Topologically, residues 148 to 179 are cytoplasmic; that stretch reads RIWVLVLQVRRRVKSETKPRLKPSDFRNFLTM. A helical transmembrane segment spans residues 180–200; sequence FVVFVIFAFCWAPLNFIGLAV. Residues 201–213 lie on the Extracellular side of the membrane; that stretch reads AINPSEMAPKVPE. Residues 214–234 traverse the membrane as a helical segment; sequence WLFIISYFMAYFNSCLNAIIY. Over 235 to 289 the chain is Cytoplasmic; sequence GLLNQNFRNEYKRILMSLWMPRLFFQDTSKGGTDGQKSKPSPALNNNDQMKTDTL. The interval 264 to 289 is disordered; it reads KGGTDGQKSKPSPALNNNDQMKTDTL.

This sequence belongs to the G-protein coupled receptor 1 family. In terms of tissue distribution, brain and kidney, with trace levels in lungs.

It localises to the cell membrane. High affinity receptor for melatonin. The activity of this receptor is mediated by pertussis toxin sensitive G proteins that inhibits adenylate cyclase activity. The chain is Melatonin receptor type 1B from Gallus gallus (Chicken).